The sequence spans 383 residues: Protein arginine N-methyltransferase PRMT10 (383 aa).

The segment at 1–23 is disordered; that stretch reads MRSSQNGGAMGGRAAGTGGGGPS. Positions 8–22 are enriched in gly residues; sequence GAMGGRAAGTGGGGP. An SAM-dependent MTase PRMT-type domain is found at 29-360; sequence EVDYAQYFCT…KENHRLMEIE (332 aa). 5 residues coordinate S-adenosyl-L-methionine: Gln45, Arg54, Gly78, Glu100, and Glu129. Residues Glu143 and Glu152 contribute to the active site. A dimerization arm region spans residues 190 to 230; it reads DRKRNDFDGAMADWHNFSDEIKSYYGVDMGVLTKPFAEEQE.

Belongs to the class I-like SAM-binding methyltransferase superfamily. Protein arginine N-methyltransferase family. In terms of assembly, ring-like homodimer.

It catalyses the reaction L-arginyl-[protein] + 2 S-adenosyl-L-methionine = N(omega),N(omega)-dimethyl-L-arginyl-[protein] + 2 S-adenosyl-L-homocysteine + 2 H(+). In terms of biological role, methylates (mono and asymmetric dimethylation) the guanidino nitrogens of arginyl residues in some proteins. Essential for regulating flowering time. This is Protein arginine N-methyltransferase PRMT10 (PRMT10) from Arabidopsis thaliana (Mouse-ear cress).